The sequence spans 229 residues: 5'-methylthioadenosine/S-adenosylhomocysteine nucleosidase (229 aa).

The active-site Proton acceptor is the Glu12. Substrate is bound by residues Gly78, Ile152, and 173–174; that span reads ME. The active-site Proton donor is the Asp197.

Belongs to the PNP/UDP phosphorylase family. MtnN subfamily.

The catalysed reaction is S-adenosyl-L-homocysteine + H2O = S-(5-deoxy-D-ribos-5-yl)-L-homocysteine + adenine. It catalyses the reaction S-methyl-5'-thioadenosine + H2O = 5-(methylsulfanyl)-D-ribose + adenine. The enzyme catalyses 5'-deoxyadenosine + H2O = 5-deoxy-D-ribose + adenine. Its pathway is amino-acid biosynthesis; L-methionine biosynthesis via salvage pathway; S-methyl-5-thio-alpha-D-ribose 1-phosphate from S-methyl-5'-thioadenosine (hydrolase route): step 1/2. Catalyzes the irreversible cleavage of the glycosidic bond in both 5'-methylthioadenosine (MTA) and S-adenosylhomocysteine (SAH/AdoHcy) to adenine and the corresponding thioribose, 5'-methylthioribose and S-ribosylhomocysteine, respectively. Also cleaves 5'-deoxyadenosine, a toxic by-product of radical S-adenosylmethionine (SAM) enzymes, into 5-deoxyribose and adenine. The protein is 5'-methylthioadenosine/S-adenosylhomocysteine nucleosidase of Mannheimia succiniciproducens (strain KCTC 0769BP / MBEL55E).